The following is a 353-amino-acid chain: Outer membrane protein P2 (353 aa).

Residues 1-20 (MKKTLAALIVGAFAASAANA) form the signal peptide.

This sequence belongs to the Gram-negative porin family. In terms of assembly, homotrimer.

It is found in the cell outer membrane. Forms pores that allow passive diffusion of small molecules across the outer membrane. In Haemophilus influenzae, this protein is Outer membrane protein P2 (ompP2).